We begin with the raw amino-acid sequence, 201 residues long: MLEKFTVIRGKAVPLRGEDIDTDRILPARFMKVLTFEGLGQYLFYDERFDEKGNPKPHPLNDPRYRGATILLVESGFGSGSSREHAPQAIKRAGFKAIIGESFAEIFFGNATAIGLPCVSLAPEDLGVLFRSVEENPELEVEIDLVNKEVRFGDRTAPLFIREEAREALVEGLWDPIGELLEAGELLDQFDRKLPYPRRTE.

Belongs to the LeuD family. LeuD type 1 subfamily. In terms of assembly, heterodimer of LeuC and LeuD.

It catalyses the reaction (2R,3S)-3-isopropylmalate = (2S)-2-isopropylmalate. It functions in the pathway amino-acid biosynthesis; L-leucine biosynthesis; L-leucine from 3-methyl-2-oxobutanoate: step 2/4. Catalyzes the isomerization between 2-isopropylmalate and 3-isopropylmalate, via the formation of 2-isopropylmaleate. In Thermus thermophilus (strain ATCC 27634 / DSM 579 / HB8), this protein is 3-isopropylmalate dehydratase small subunit (leuD).